The primary structure comprises 618 residues: GMC oxidoreductase family protein Mala s 12 (618 aa).

A signal peptide spans 1–23; the sequence is MKGIVSWAVVSAALVLSATESLA. The FAD site is built by Val129 and Val280. His556 (proton donor) is an active-site residue. The active-site Proton acceptor is His599.

It belongs to the GMC oxidoreductase family. In terms of assembly, monomer. FAD serves as cofactor.

Its subcellular location is the secreted. The sequence is that of GMC oxidoreductase family protein Mala s 12 from Malassezia sympodialis (strain ATCC 42132) (Atopic eczema-associated yeast).